Here is a 35-residue protein sequence, read N- to C-terminus: Dolichyl-diphosphooligosaccharide--protein glycosyltransferase subunit 4B (35 aa).

The Lumenal segment spans residues 1 to 8; that stretch reads MFDDQDLG. A helical membrane pass occupies residues 9–29; sequence FFANFLGIFIFIMVIAYHFVV. Residues 30 to 35 are Cytoplasmic-facing; that stretch reads AEPKFE.

It belongs to the OST4 family. Component of the oligosaccharyltransferase (OST) complex.

It is found in the endoplasmic reticulum membrane. Its function is as follows. Subunit of the oligosaccharyl transferase (OST) complex that catalyzes the initial transfer of a defined glycan (Glc(3)Man(9)GlcNAc(2) in eukaryotes) from the lipid carrier dolichol-pyrophosphate to an asparagine residue within an Asn-X-Ser/Thr consensus motif in nascent polypeptide chains, the first step in protein N-glycosylation. N-glycosylation occurs cotranslationally and the complex associates with the Sec61 complex at the channel-forming translocon complex that mediates protein translocation across the endoplasmic reticulum (ER). All subunits are required for a maximal enzyme activity. This chain is Dolichyl-diphosphooligosaccharide--protein glycosyltransferase subunit 4B (OST4B), found in Arabidopsis thaliana (Mouse-ear cress).